The following is a 358-amino-acid chain: Programmed cell death protein 2-like (358 aa).

Residue A2 is modified to N-acetylalanine. Phosphoserine is present on S20. T22 bears the Phosphothreonine mark.

In terms of tissue distribution, higher expression in lung, colon, mammary gland, cervix, stomach and small intestine.

In terms of biological role, over-expression suppresses AP1, CREB, NFAT, and NF-kB transcriptional activation, and delays cell cycle progression at S phase. The protein is Programmed cell death protein 2-like (PDCD2L) of Homo sapiens (Human).